A 98-amino-acid polypeptide reads, in one-letter code: Large ribosomal subunit protein uL23 (98 aa).

The protein belongs to the universal ribosomal protein uL23 family. In terms of assembly, part of the 50S ribosomal subunit. Contacts protein L29, and trigger factor when it is bound to the ribosome.

One of the early assembly proteins it binds 23S rRNA. One of the proteins that surrounds the polypeptide exit tunnel on the outside of the ribosome. Forms the main docking site for trigger factor binding to the ribosome. This is Large ribosomal subunit protein uL23 from Methylorubrum extorquens (strain CM4 / NCIMB 13688) (Methylobacterium extorquens).